A 347-amino-acid chain; its full sequence is MKNILDYTLEELTLWMKENNESSFRAKQIMSWIYKDVRNFSDMRNMPKSLIAKLEENFEIALPEIEEIYKSELDGTEKFLFKFSDGNLIESVLMRYKHGNSICISTQVGCRMGCKFCASTIDGRIRNLTTGEILAQILVVQNHIGERISNVVLMGSGEPLDNYENVMKFLDIVSAEYGLNIGQRHITLSTCGIVPKIYELADKELSITLAISLHAFSDEKRKEIMPIANKYSIDEILNACKYFVNKTKRRITFEYSLVKDVNDSKEDARALGKLLKGMLCHVNLIPVNEIKERTFKRSSKETIQDFANILSNLGIEVTVRREMGSDINAACGQLRRSYIKTQETRGE.

Residue Glu90 is the Proton acceptor of the active site. A Radical SAM core domain is found at 96–326 (YKHGNSICIS…VTVRREMGSD (231 aa)). Cys103 and Cys331 are disulfide-bonded. Positions 110, 114, and 117 each coordinate [4Fe-4S] cluster. S-adenosyl-L-methionine is bound by residues 157–158 (GE), Ser189, 212–214 (SLH), and Asn288. Cys331 (S-methylcysteine intermediate) is an active-site residue.

This sequence belongs to the radical SAM superfamily. RlmN family. Requires [4Fe-4S] cluster as cofactor.

It is found in the cytoplasm. It carries out the reaction adenosine(2503) in 23S rRNA + 2 reduced [2Fe-2S]-[ferredoxin] + 2 S-adenosyl-L-methionine = 2-methyladenosine(2503) in 23S rRNA + 5'-deoxyadenosine + L-methionine + 2 oxidized [2Fe-2S]-[ferredoxin] + S-adenosyl-L-homocysteine. It catalyses the reaction adenosine(37) in tRNA + 2 reduced [2Fe-2S]-[ferredoxin] + 2 S-adenosyl-L-methionine = 2-methyladenosine(37) in tRNA + 5'-deoxyadenosine + L-methionine + 2 oxidized [2Fe-2S]-[ferredoxin] + S-adenosyl-L-homocysteine. Specifically methylates position 2 of adenine 2503 in 23S rRNA and position 2 of adenine 37 in tRNAs. In Clostridium botulinum (strain Eklund 17B / Type B), this protein is Probable dual-specificity RNA methyltransferase RlmN.